Here is a 359-residue protein sequence, read N- to C-terminus: Protein RecA (359 aa).

74-81 (GPESSGKT) is an ATP binding site.

Belongs to the RecA family.

Its subcellular location is the cytoplasm. Functionally, can catalyze the hydrolysis of ATP in the presence of single-stranded DNA, the ATP-dependent uptake of single-stranded DNA by duplex DNA, and the ATP-dependent hybridization of homologous single-stranded DNAs. It interacts with LexA causing its activation and leading to its autocatalytic cleavage. The chain is Protein RecA from Anaplasma marginale (strain Florida).